The sequence spans 59 residues: Large ribosomal subunit protein bL32 (59 aa).

The protein belongs to the bacterial ribosomal protein bL32 family.

The chain is Large ribosomal subunit protein bL32 from Mycoplasma capricolum subsp. capricolum (strain California kid / ATCC 27343 / NCTC 10154).